A 226-amino-acid chain; its full sequence is 2-C-methyl-D-erythritol 4-phosphate cytidylyltransferase (226 aa).

The protein belongs to the IspD/TarI cytidylyltransferase family. IspD subfamily.

It carries out the reaction 2-C-methyl-D-erythritol 4-phosphate + CTP + H(+) = 4-CDP-2-C-methyl-D-erythritol + diphosphate. The protein operates within isoprenoid biosynthesis; isopentenyl diphosphate biosynthesis via DXP pathway; isopentenyl diphosphate from 1-deoxy-D-xylulose 5-phosphate: step 2/6. Functionally, catalyzes the formation of 4-diphosphocytidyl-2-C-methyl-D-erythritol from CTP and 2-C-methyl-D-erythritol 4-phosphate (MEP). This is 2-C-methyl-D-erythritol 4-phosphate cytidylyltransferase from Parasynechococcus marenigrum (strain WH8102).